Reading from the N-terminus, the 938-residue chain is Scm-like with four MBT domains protein 2 (938 aa).

The tract at residues 1-32 (MERYLPVSKKRNSSSSLEKITGSANGNGTLYS) is disordered. Residues 13-30 (SSSSLEKITGSANGNGTL) show a composition bias toward polar residues. MBT repeat units lie at residues 43-143 (FSWG…LRPP), 151-255 (SDWT…MDPP), 265-371 (FEWK…LAPP), and 379-475 (FNWV…LTTP). A disordered region spans residues 742–836 (PEGIPESLPE…TVPTTASSNN (95 aa)). Basic and acidic residues-rich tracts occupy residues 765–777 (TEQE…DTAR) and 809–822 (RNSE…VERA). The region spanning 868–931 (WSVTDVVRFI…CHQIERVKVA (64 aa)) is the SAM domain.

As to quaternary structure, interacts with YY1. Interacts with methylated histones H3K9me2 and H4K20me2. Expressed in testis and, at much lower levels, in ovary.

It is found in the nucleus. Functionally, transcriptional repressor of HOXB13 gene. The protein is Scm-like with four MBT domains protein 2 (Sfmbt2) of Mus musculus (Mouse).